The primary structure comprises 284 residues: Mevalonate kinase (284 aa).

ATP is bound at residue 86 to 96; sequence PIGSGLGSSAA. The active-site Proton acceptor is aspartate 137.

Belongs to the GHMP kinase family. Mevalonate kinase subfamily. As to quaternary structure, homodimer. The cofactor is Mg(2+).

The protein localises to the cytoplasm. It catalyses the reaction (R)-mevalonate + ATP = (R)-5-phosphomevalonate + ADP + H(+). The protein operates within isoprenoid biosynthesis; isopentenyl diphosphate biosynthesis via mevalonate pathway; isopentenyl diphosphate from (R)-mevalonate: step 1/3. Functionally, catalyzes the phosphorylation of (R)-mevalonate (MVA) to (R)-mevalonate 5-phosphate (MVAP). Functions in the mevalonate (MVA) pathway leading to isopentenyl diphosphate (IPP), a key precursor for the biosynthesis of isoprenoid compounds such as archaeal membrane lipids. The sequence is that of Mevalonate kinase from Archaeoglobus fulgidus (strain ATCC 49558 / DSM 4304 / JCM 9628 / NBRC 100126 / VC-16).